The chain runs to 127 residues: Small ribosomal subunit protein uS13 (127 aa).

The span at L96 to V118 shows a compositional bias: basic residues. The disordered stretch occupies residues L96–R127.

It belongs to the universal ribosomal protein uS13 family. Part of the 30S ribosomal subunit. Forms a loose heterodimer with protein S19. Forms two bridges to the 50S subunit in the 70S ribosome.

Located at the top of the head of the 30S subunit, it contacts several helices of the 16S rRNA. In the 70S ribosome it contacts the 23S rRNA (bridge B1a) and protein L5 of the 50S subunit (bridge B1b), connecting the 2 subunits; these bridges are implicated in subunit movement. Contacts the tRNAs in the A and P-sites. The protein is Small ribosomal subunit protein uS13 of Myxococcus xanthus (strain DK1622).